A 207-amino-acid chain; its full sequence is Large ribosomal subunit protein bL17m (207 aa).

Positions 173–200 (EKESEHARLKEDHEDEKTVKKDWKRGDP) are enriched in basic and acidic residues. The segment at 173–207 (EKESEHARLKEDHEDEKTVKKDWKRGDPIPRPTYI) is disordered.

The protein belongs to the bacterial ribosomal protein bL17 family. Component of the mitochondrial large ribosomal subunit (mt-LSU). Mature yeast 74S mitochondrial ribosomes consist of a small (37S) and a large (54S) subunit. The 37S small subunit contains a 15S ribosomal RNA (15S mt-rRNA) and at least 32 different proteins. The 54S large subunit contains a 21S rRNA (21S mt-rRNA) and at least 45 different proteins.

It localises to the mitochondrion. Functionally, component of the mitochondrial ribosome (mitoribosome), a dedicated translation machinery responsible for the synthesis of mitochondrial genome-encoded proteins, including at least some of the essential transmembrane subunits of the mitochondrial respiratory chain. The mitoribosomes are attached to the mitochondrial inner membrane and translation products are cotranslationally integrated into the membrane. This chain is Large ribosomal subunit protein bL17m (mrpl8), found in Schizosaccharomyces pombe (strain 972 / ATCC 24843) (Fission yeast).